The following is a 335-amino-acid chain: 4-hydroxy-3-methylbut-2-enyl diphosphate reductase (335 aa).

Cys14 serves as a coordination point for [4Fe-4S] cluster. 2 residues coordinate (2E)-4-hydroxy-3-methylbut-2-enyl diphosphate: His43 and His81. 2 residues coordinate dimethylallyl diphosphate: His43 and His81. Residues His43 and His81 each contribute to the isopentenyl diphosphate site. Cys103 contributes to the [4Fe-4S] cluster binding site. Position 132 (His132) interacts with (2E)-4-hydroxy-3-methylbut-2-enyl diphosphate. His132 is a dimethylallyl diphosphate binding site. An isopentenyl diphosphate-binding site is contributed by His132. The active-site Proton donor is Glu134. Thr179 lines the (2E)-4-hydroxy-3-methylbut-2-enyl diphosphate pocket. Residue Cys209 participates in [4Fe-4S] cluster binding. 4 residues coordinate (2E)-4-hydroxy-3-methylbut-2-enyl diphosphate: Ser237, Ser238, Asn239, and Ser285. The dimethylallyl diphosphate site is built by Ser237, Ser238, Asn239, and Ser285. Ser237, Ser238, Asn239, and Ser285 together coordinate isopentenyl diphosphate.

Belongs to the IspH family. [4Fe-4S] cluster serves as cofactor.

The enzyme catalyses isopentenyl diphosphate + 2 oxidized [2Fe-2S]-[ferredoxin] + H2O = (2E)-4-hydroxy-3-methylbut-2-enyl diphosphate + 2 reduced [2Fe-2S]-[ferredoxin] + 2 H(+). The catalysed reaction is dimethylallyl diphosphate + 2 oxidized [2Fe-2S]-[ferredoxin] + H2O = (2E)-4-hydroxy-3-methylbut-2-enyl diphosphate + 2 reduced [2Fe-2S]-[ferredoxin] + 2 H(+). Its pathway is isoprenoid biosynthesis; dimethylallyl diphosphate biosynthesis; dimethylallyl diphosphate from (2E)-4-hydroxy-3-methylbutenyl diphosphate: step 1/1. It participates in isoprenoid biosynthesis; isopentenyl diphosphate biosynthesis via DXP pathway; isopentenyl diphosphate from 1-deoxy-D-xylulose 5-phosphate: step 6/6. Functionally, catalyzes the conversion of 1-hydroxy-2-methyl-2-(E)-butenyl 4-diphosphate (HMBPP) into a mixture of isopentenyl diphosphate (IPP) and dimethylallyl diphosphate (DMAPP). Acts in the terminal step of the DOXP/MEP pathway for isoprenoid precursor biosynthesis. This chain is 4-hydroxy-3-methylbut-2-enyl diphosphate reductase, found in Deinococcus radiodurans (strain ATCC 13939 / DSM 20539 / JCM 16871 / CCUG 27074 / LMG 4051 / NBRC 15346 / NCIMB 9279 / VKM B-1422 / R1).